Consider the following 493-residue polypeptide: Keratin, type II cuticular Hb3 (493 aa).

The tract at residues M1 to E111 is head. Positions E111 to L422 constitute an IF rod domain. Residues K112–Y146 form a coil 1A region. The segment at Q147 to L156 is linker 1. A coil 1B region spans residues E157–A257. K217 participates in a covalent cross-link: Glycyl lysine isopeptide (Lys-Gly) (interchain with G-Cter in SUMO1). Residues N258 to L274 form a linker 12 region. The coil 2 stretch occupies residues N275–E418. The tail stretch occupies residues E419–C493.

It belongs to the intermediate filament family. In terms of assembly, heterotetramer of two type I and two type II keratins.

In Bos taurus (Bovine), this protein is Keratin, type II cuticular Hb3.